Here is a 209-residue protein sequence, read N- to C-terminus: Thiamine-phosphate synthase (209 aa).

4-amino-2-methyl-5-(diphosphooxymethyl)pyrimidine contacts are provided by residues 37-41 (QYRDK) and Asn-69. Residues Asp-70 and Asp-89 each contribute to the Mg(2+) site. Ser-108 provides a ligand contact to 4-amino-2-methyl-5-(diphosphooxymethyl)pyrimidine. 135–137 (SPT) lines the 2-[(2R,5Z)-2-carboxy-4-methylthiazol-5(2H)-ylidene]ethyl phosphate pocket. Lys-138 lines the 4-amino-2-methyl-5-(diphosphooxymethyl)pyrimidine pocket. 2-[(2R,5Z)-2-carboxy-4-methylthiazol-5(2H)-ylidene]ethyl phosphate-binding positions include Gly-165 and 185-186 (VS).

This sequence belongs to the thiamine-phosphate synthase family. Mg(2+) is required as a cofactor.

It catalyses the reaction 2-[(2R,5Z)-2-carboxy-4-methylthiazol-5(2H)-ylidene]ethyl phosphate + 4-amino-2-methyl-5-(diphosphooxymethyl)pyrimidine + 2 H(+) = thiamine phosphate + CO2 + diphosphate. The enzyme catalyses 2-(2-carboxy-4-methylthiazol-5-yl)ethyl phosphate + 4-amino-2-methyl-5-(diphosphooxymethyl)pyrimidine + 2 H(+) = thiamine phosphate + CO2 + diphosphate. The catalysed reaction is 4-methyl-5-(2-phosphooxyethyl)-thiazole + 4-amino-2-methyl-5-(diphosphooxymethyl)pyrimidine + H(+) = thiamine phosphate + diphosphate. It functions in the pathway cofactor biosynthesis; thiamine diphosphate biosynthesis; thiamine phosphate from 4-amino-2-methyl-5-diphosphomethylpyrimidine and 4-methyl-5-(2-phosphoethyl)-thiazole: step 1/1. Condenses 4-methyl-5-(beta-hydroxyethyl)thiazole monophosphate (THZ-P) and 2-methyl-4-amino-5-hydroxymethyl pyrimidine pyrophosphate (HMP-PP) to form thiamine monophosphate (TMP). This Halorhodospira halophila (strain DSM 244 / SL1) (Ectothiorhodospira halophila (strain DSM 244 / SL1)) protein is Thiamine-phosphate synthase.